Here is a 118-residue protein sequence, read N- to C-terminus: Small ribosomal subunit protein uS13 (118 aa).

The disordered stretch occupies residues 92–118; it reads RRSLPVRGQRTKTNARTRKGPRKPIKK.

The protein belongs to the universal ribosomal protein uS13 family. In terms of assembly, part of the 30S ribosomal subunit. Forms a loose heterodimer with protein S19. Forms two bridges to the 50S subunit in the 70S ribosome.

Located at the top of the head of the 30S subunit, it contacts several helices of the 16S rRNA. In the 70S ribosome it contacts the 23S rRNA (bridge B1a) and protein L5 of the 50S subunit (bridge B1b), connecting the 2 subunits; these bridges are implicated in subunit movement. Contacts the tRNAs in the A and P-sites. This Acinetobacter baylyi (strain ATCC 33305 / BD413 / ADP1) protein is Small ribosomal subunit protein uS13.